The chain runs to 239 residues: Small ribosomal subunit protein uS2 (239 aa).

It belongs to the universal ribosomal protein uS2 family.

The sequence is that of Small ribosomal subunit protein uS2 from Francisella tularensis subsp. tularensis (strain WY96-3418).